We begin with the raw amino-acid sequence, 357 residues long: NADH-quinone oxidoreductase subunit H (357 aa).

Transmembrane regions (helical) follow at residues 20–40 (WLLV…MGCV), 92–112 (ALFV…WAVI), 127–147 (LLFV…AGWA), 165–185 (ISYE…SGSL), 203–223 (GLTF…IYII), 259–279 (FFLA…LMFL), 294–314 (IPGW…FIWF), and 329–349 (LGWK…AIWM).

This sequence belongs to the complex I subunit 1 family. In terms of assembly, NDH-1 is composed of 14 different subunits. Subunits NuoA, H, J, K, L, M, N constitute the membrane sector of the complex.

The protein localises to the cell inner membrane. It carries out the reaction a quinone + NADH + 5 H(+)(in) = a quinol + NAD(+) + 4 H(+)(out). In terms of biological role, NDH-1 shuttles electrons from NADH, via FMN and iron-sulfur (Fe-S) centers, to quinones in the respiratory chain. The immediate electron acceptor for the enzyme in this species is believed to be ubiquinone. Couples the redox reaction to proton translocation (for every two electrons transferred, four hydrogen ions are translocated across the cytoplasmic membrane), and thus conserves the redox energy in a proton gradient. This subunit may bind ubiquinone. The protein is NADH-quinone oxidoreductase subunit H of Herminiimonas arsenicoxydans.